The primary structure comprises 380 residues: Cytochrome b (380 aa).

Transmembrane regions (helical) follow at residues 34-54 (FGSL…LLAA), 78-99 (WLLR…YLHI), 114-134 (WNTG…GYVL), and 179-199 (FFAL…IHLT). 2 residues coordinate heme b: His-84 and His-98. The heme b site is built by His-183 and His-197. His-202 provides a ligand contact to a ubiquinone. 4 helical membrane-spanning segments follow: residues 227–247 (LKDI…ALFH), 289–309 (LGGV…PFLH), 321–341 (LSQL…WIGS), and 348–368 (FIII…VLFP).

The protein belongs to the cytochrome b family. The cytochrome bc1 complex contains 11 subunits: 3 respiratory subunits (MT-CYB, CYC1 and UQCRFS1), 2 core proteins (UQCRC1 and UQCRC2) and 6 low-molecular weight proteins (UQCRH/QCR6, UQCRB/QCR7, UQCRQ/QCR8, UQCR10/QCR9, UQCR11/QCR10 and a cleavage product of UQCRFS1). This cytochrome bc1 complex then forms a dimer. It depends on heme b as a cofactor.

Its subcellular location is the mitochondrion inner membrane. In terms of biological role, component of the ubiquinol-cytochrome c reductase complex (complex III or cytochrome b-c1 complex) that is part of the mitochondrial respiratory chain. The b-c1 complex mediates electron transfer from ubiquinol to cytochrome c. Contributes to the generation of a proton gradient across the mitochondrial membrane that is then used for ATP synthesis. This Trogon curucui (Blue-crowned trogon) protein is Cytochrome b (MT-CYB).